Here is a 553-residue protein sequence, read N- to C-terminus: Putative transport protein KPN78578_40470 (553 aa).

A run of 5 helical transmembrane segments spans residues 4–24 (IALTVSVLALVAVVGLWIGNV), 28–48 (GVGFGIGGVLFGGIIVGHFVD), 65–85 (FGLILFVYTIGIQVGPGFFAS), 95–115 (LFAILIVILGGLVTAVLHKLF), and 158–178 (MSYAMAYPFGICGILLTMWLV). 2 RCK C-terminal domains span residues 192–276 (RFEE…VIGQ) and 279–361 (ATSL…ELGN). Transmembrane regions (helical) follow at residues 371-391 (MLPVFIGIGLGVLLGSIPLFI), 403-425 (AGGPLIMALILGRIGSIGKLYWF), 437-457 (LGIVLFLAVVGLKSGGDFVAT), 464-484 (LSWIAYGIFITAIPLLTVGVL), 493-513 (YLTLCGMLAGSMTDPPALAFA), and 532-552 (PLVMFLRIITPQLLAVLFWGL).

Belongs to the AAE transporter (TC 2.A.81) family. YidE subfamily.

The protein resides in the cell membrane. This chain is Putative transport protein KPN78578_40470, found in Klebsiella pneumoniae subsp. pneumoniae (strain ATCC 700721 / MGH 78578).